Reading from the N-terminus, the 295-residue chain is Ethanolamine ammonia-lyase small subunit (295 aa).

Valine 209 and glutamate 230 together coordinate adenosylcob(III)alamin.

It belongs to the EutC family. As to quaternary structure, the basic unit is a heterodimer which dimerizes to form tetramers. The heterotetramers trimerize; 6 large subunits form a core ring with 6 small subunits projecting outwards. It depends on adenosylcob(III)alamin as a cofactor.

The protein resides in the bacterial microcompartment. It catalyses the reaction ethanolamine = acetaldehyde + NH4(+). It participates in amine and polyamine degradation; ethanolamine degradation. Its function is as follows. Catalyzes the deamination of various vicinal amino-alcohols to oxo compounds. Allows this organism to utilize ethanolamine as the sole source of nitrogen and carbon in the presence of external vitamin B12. The sequence is that of Ethanolamine ammonia-lyase small subunit from Clostridium perfringens (strain ATCC 13124 / DSM 756 / JCM 1290 / NCIMB 6125 / NCTC 8237 / Type A).